The chain runs to 471 residues: ATP synthase subunit beta (471 aa).

ATP is bound at residue 153–160 (GGAGVGKT).

It belongs to the ATPase alpha/beta chains family. As to quaternary structure, F-type ATPases have 2 components, CF(1) - the catalytic core - and CF(0) - the membrane proton channel. CF(1) has five subunits: alpha(3), beta(3), gamma(1), delta(1), epsilon(1). CF(0) has four main subunits: a(1), b(1), b'(1) and c(9-12).

The protein resides in the cell membrane. The catalysed reaction is ATP + H2O + 4 H(+)(in) = ADP + phosphate + 5 H(+)(out). Its function is as follows. Produces ATP from ADP in the presence of a proton gradient across the membrane. The catalytic sites are hosted primarily by the beta subunits. This Roseiflexus castenholzii (strain DSM 13941 / HLO8) protein is ATP synthase subunit beta.